The primary structure comprises 104 residues: Large ribosomal subunit protein uL24 (104 aa).

It belongs to the universal ribosomal protein uL24 family. Part of the 50S ribosomal subunit.

In terms of biological role, one of two assembly initiator proteins, it binds directly to the 5'-end of the 23S rRNA, where it nucleates assembly of the 50S subunit. Its function is as follows. One of the proteins that surrounds the polypeptide exit tunnel on the outside of the subunit. This chain is Large ribosomal subunit protein uL24, found in Afipia carboxidovorans (strain ATCC 49405 / DSM 1227 / KCTC 32145 / OM5) (Oligotropha carboxidovorans).